We begin with the raw amino-acid sequence, 212 residues long: ATP-dependent dethiobiotin synthetase BioD (212 aa).

13–18 (GIGKTV) serves as a coordination point for ATP. Thr17 serves as a coordination point for Mg(2+). The active site involves Lys33. A substrate-binding site is contributed by Ser37. Glu100 serves as a coordination point for Mg(2+). ATP-binding positions include 100–103 (EGAG) and 184–186 (PRL).

This sequence belongs to the dethiobiotin synthetase family. In terms of assembly, homodimer. Mg(2+) is required as a cofactor.

It is found in the cytoplasm. It carries out the reaction (7R,8S)-7,8-diammoniononanoate + CO2 + ATP = (4R,5S)-dethiobiotin + ADP + phosphate + 3 H(+). It participates in cofactor biosynthesis; biotin biosynthesis; biotin from 7,8-diaminononanoate: step 1/2. Catalyzes a mechanistically unusual reaction, the ATP-dependent insertion of CO2 between the N7 and N8 nitrogen atoms of 7,8-diaminopelargonic acid (DAPA, also called 7,8-diammoniononanoate) to form a ureido ring. The polypeptide is ATP-dependent dethiobiotin synthetase BioD (Brucella anthropi (strain ATCC 49188 / DSM 6882 / CCUG 24695 / JCM 21032 / LMG 3331 / NBRC 15819 / NCTC 12168 / Alc 37) (Ochrobactrum anthropi)).